The following is a 43-amino-acid chain: Oxygen-evolving enhancer protein 2 (43 aa).

The protein belongs to the PsbP family.

The protein localises to the plastid. Its subcellular location is the chloroplast thylakoid membrane. In terms of biological role, may be involved in the regulation of photosystem II. In Physcomitrium patens (Spreading-leaved earth moss), this protein is Oxygen-evolving enhancer protein 2.